The sequence spans 323 residues: tRNA U34 carboxymethyltransferase (323 aa).

Carboxy-S-adenosyl-L-methionine-binding positions include Lys-91, Trp-105, Lys-110, Gly-130, 152–154 (DPT), 181–182 (IE), Met-196, Tyr-200, and Arg-315.

The protein belongs to the class I-like SAM-binding methyltransferase superfamily. CmoB family. As to quaternary structure, homotetramer.

It catalyses the reaction carboxy-S-adenosyl-L-methionine + 5-hydroxyuridine(34) in tRNA = 5-carboxymethoxyuridine(34) in tRNA + S-adenosyl-L-homocysteine + H(+). Catalyzes carboxymethyl transfer from carboxy-S-adenosyl-L-methionine (Cx-SAM) to 5-hydroxyuridine (ho5U) to form 5-carboxymethoxyuridine (cmo5U) at position 34 in tRNAs. The sequence is that of tRNA U34 carboxymethyltransferase from Salmonella arizonae (strain ATCC BAA-731 / CDC346-86 / RSK2980).